The primary structure comprises 185 residues: Adenine phosphoribosyltransferase (185 aa).

The protein belongs to the purine/pyrimidine phosphoribosyltransferase family. In terms of assembly, homodimer.

The protein resides in the cytoplasm. It catalyses the reaction AMP + diphosphate = 5-phospho-alpha-D-ribose 1-diphosphate + adenine. The protein operates within purine metabolism; AMP biosynthesis via salvage pathway; AMP from adenine: step 1/1. Its function is as follows. Catalyzes a salvage reaction resulting in the formation of AMP, that is energically less costly than de novo synthesis. This is Adenine phosphoribosyltransferase from Corynebacterium glutamicum (strain ATCC 13032 / DSM 20300 / JCM 1318 / BCRC 11384 / CCUG 27702 / LMG 3730 / NBRC 12168 / NCIMB 10025 / NRRL B-2784 / 534).